The primary structure comprises 895 residues: Transcription factor SWI6 (895 aa).

Residues 1-45 show a composition bias toward polar residues; that stretch reads MASTVAGNSFVSQQHPGNLHSANLQSQSQGFRRQNSTSSVPSTAS. Residues 1 to 107 are disordered; sequence MASTVAGNSF…SDQNVPQQPQ (107 aa). Over residues 64–100 the composition is skewed to low complexity; sequence MSSQQSQPPASQQSFSMSQTGSQPQPSQSSFRSYSDQ. The region spanning 112-219 is the HTH APSES-type domain; that stretch reads IYTAVYSNVE…NRNPDGSVSQ (108 aa). Residues 143–164 constitute a DNA-binding region (H-T-H motif); that stretch reads ATQILKVAGVEKGKRTKILEKE. 2 disordered regions span residues 272–293 and 323–358; these read ARFD…SFQR and NMAF…NSFG. ANK repeat units follow at residues 458–488 and 607–636; these read QCHT…PFRV and AGDT…SPHI. Residues 653–684 form a disordered region; it reads SDGAMKTKGDSGGDVENGDVGGSSQKSNESSN. Residues 674-684 are compositionally biased toward polar residues; the sequence is GSSQKSNESSN. The stretch at 698 to 759 forms a coiled coil; sequence SANFQEEIKN…VTNLQRAEER (62 aa).

It is found in the nucleus. Functionally, transcription factor that plays a role downstream of the MCK1-MKK2-MPS1 cascade. Required for hyphal morphogenesis and pathogenicity. Is an important oxidative stress response regulator and plays a positive role in the regulation of extracellular peroxidases. This is Transcription factor SWI6 from Pyricularia oryzae (strain 70-15 / ATCC MYA-4617 / FGSC 8958) (Rice blast fungus).